We begin with the raw amino-acid sequence, 468 residues long: Protein C-ets-2 (468 aa).

A PNT domain is found at 85–170 (ATFSGFQKEQ…EHLEQMIKEN (86 aa)). Phosphoserine occurs at positions 220 and 225. The tract at residues 262–290 (VNLLNNNSGKPKDHDSPENGGDSFESSDS) is disordered. Residues Ser-294, Ser-297, and Ser-300 each carry the phosphoserine modification. Residues 362 to 442 (IQLWQFLLEL…SGKRYVYRFV (81 aa)) constitute a DNA-binding region (ETS).

It belongs to the ETS family. Phosphorylation by CDK10 at Ser-220 and Ser-225 creates a phosphodegron that targets ETS2 for proteasomal degradation.

It is found in the nucleus. Its function is as follows. Transcription factor activating transcription. Binds specifically the GGA DNA motif in gene promoters and stimulates transcription of those genes. The sequence is that of Protein C-ets-2 (Ets2) from Mus musculus (Mouse).